The sequence spans 163 residues: Ribosome maturation factor RimM (163 aa).

One can recognise a PRC barrel domain in the interval 90-155; sequence VGEYYCKDLV…ADIDLNKKRL (66 aa).

The protein belongs to the RimM family. As to quaternary structure, binds ribosomal protein uS19.

It localises to the cytoplasm. In terms of biological role, an accessory protein needed during the final step in the assembly of 30S ribosomal subunit, possibly for assembly of the head region. Essential for efficient processing of 16S rRNA. May be needed both before and after RbfA during the maturation of 16S rRNA. It has affinity for free ribosomal 30S subunits but not for 70S ribosomes. The sequence is that of Ribosome maturation factor RimM from Neorickettsia sennetsu (strain ATCC VR-367 / Miyayama) (Ehrlichia sennetsu).